A 416-amino-acid polypeptide reads, in one-letter code: UDP-N-acetylglucosamine 1-carboxyvinyltransferase (416 aa).

22-23 lines the phosphoenolpyruvate pocket; that stretch reads KN. Residue arginine 92 coordinates UDP-N-acetyl-alpha-D-glucosamine. The active-site Proton donor is cysteine 116. The residue at position 116 (cysteine 116) is a 2-(S-cysteinyl)pyruvic acid O-phosphothioketal. Residues 121–125, aspartate 304, and isoleucine 326 contribute to the UDP-N-acetyl-alpha-D-glucosamine site; that span reads RPVDQ.

Belongs to the EPSP synthase family. MurA subfamily.

It localises to the cytoplasm. The enzyme catalyses phosphoenolpyruvate + UDP-N-acetyl-alpha-D-glucosamine = UDP-N-acetyl-3-O-(1-carboxyvinyl)-alpha-D-glucosamine + phosphate. It functions in the pathway cell wall biogenesis; peptidoglycan biosynthesis. In terms of biological role, cell wall formation. Adds enolpyruvyl to UDP-N-acetylglucosamine. The sequence is that of UDP-N-acetylglucosamine 1-carboxyvinyltransferase from Cupriavidus necator (strain ATCC 17699 / DSM 428 / KCTC 22496 / NCIMB 10442 / H16 / Stanier 337) (Ralstonia eutropha).